The following is a 78-amino-acid chain: Large ribosomal subunit protein bL28 (78 aa).

This sequence belongs to the bacterial ribosomal protein bL28 family.

The chain is Large ribosomal subunit protein bL28 from Hydrogenovibrio crunogenus (strain DSM 25203 / XCL-2) (Thiomicrospira crunogena).